Consider the following 169-residue polypeptide: Putative antitoxin Rv0268c (169 aa).

The span at 1 to 11 shows a compositional bias: basic residues; it reads MGTRSKSRTRQ. The interval 1 to 35 is disordered; it reads MGTRSKSRTRQLKQSNGCTATTSGASDRRRRARRR. Residues 120-153 adopt a coiled-coil conformation; it reads AAILISAERYESLMEELEDLRDRLSVHEREHVTM.

It belongs to the phD/YefM antitoxin family.

Putative antitoxin component of a type II toxin-antitoxin (TA) system; however the expected toxin coding sequence is not found adjacent to this gene. The sequence is that of Putative antitoxin Rv0268c from Mycobacterium tuberculosis (strain ATCC 25618 / H37Rv).